The primary structure comprises 299 residues: Oxygen-dependent coproporphyrinogen-III oxidase (299 aa).

Position 92 (Ser92) interacts with substrate. The Mn(2+) site is built by His96 and His106. The Proton donor role is filled by His106. 108-110 (NVR) lines the substrate pocket. 2 residues coordinate Mn(2+): His145 and His175. Residues 240 to 275 (YVEFNLVWDRGTLFGLQTGGRTESILMSMPPLVRWE) are important for dimerization. Residue 258–260 (GGR) participates in substrate binding.

It belongs to the aerobic coproporphyrinogen-III oxidase family. In terms of assembly, homodimer. Mn(2+) serves as cofactor.

It localises to the cytoplasm. It carries out the reaction coproporphyrinogen III + O2 + 2 H(+) = protoporphyrinogen IX + 2 CO2 + 2 H2O. It functions in the pathway porphyrin-containing compound metabolism; protoporphyrin-IX biosynthesis; protoporphyrinogen-IX from coproporphyrinogen-III (O2 route): step 1/1. Involved in the heme biosynthesis. Catalyzes the aerobic oxidative decarboxylation of propionate groups of rings A and B of coproporphyrinogen-III to yield the vinyl groups in protoporphyrinogen-IX. This Escherichia coli O157:H7 protein is Oxygen-dependent coproporphyrinogen-III oxidase.